We begin with the raw amino-acid sequence, 613 residues long: Vitamin B12 transporter BtuB (613 aa).

Positions 1-22 are cleaved as a signal peptide; it reads MQKSLLAIAMASLLTPISYLHA. A TonB box motif is present at residues 29-36; the sequence is DTVVVTAN. A TBDR plug domain is found at 41–154; it reads VESSVLASIS…IGGVIHIKTI (114 aa). The TBDR beta-barrel domain occupies 159-613; the sequence is QTKHDANLGY…NWFATVNYRF (455 aa). Positions 591-613 match the TonB C-terminal box motif; the sequence is HSSGGKYYVGEGRNWFATVNYRF.

The protein belongs to the TonB-dependent receptor family. BtuB (TC 1.B.14.3.1) subfamily.

It localises to the cell outer membrane. Functionally, involved in the active translocation of vitamin B12 (cyanocobalamin) across the outer membrane to the periplasmic space. It derives its energy for transport by interacting with the trans-periplasmic membrane protein TonB. This chain is Vitamin B12 transporter BtuB, found in Vibrio vulnificus (strain YJ016).